The sequence spans 609 residues: NADH-ubiquinone oxidoreductase chain 5 (609 aa).

Transmembrane regions (helical) follow at residues 6-26 (SSIL…MTNL), 35-55 (YATS…LLFF), 84-104 (YFSI…MQFS), 116-138 (RFIK…NNLF), 140-160 (LFIG…WWYG), 171-191 (AILY…WFCL), 240-260 (TPVS…FLMI), 272-292 (IMTA…ICAL), 300-319 (IVAF…LGIN), 330-350 (THAF…HSLN), 365-385 (MPFT…MPFL), 409-429 (MITL…IYFV), 456-476 (LALG…PTNI), 481-501 (MPWH…AIAL), and 581-601 (GLIK…FILH).

This sequence belongs to the complex I subunit 5 family. As to quaternary structure, core subunit of respiratory chain NADH dehydrogenase (Complex I) which is composed of 45 different subunits.

It is found in the mitochondrion inner membrane. The enzyme catalyses a ubiquinone + NADH + 5 H(+)(in) = a ubiquinol + NAD(+) + 4 H(+)(out). Core subunit of the mitochondrial membrane respiratory chain NADH dehydrogenase (Complex I) which catalyzes electron transfer from NADH through the respiratory chain, using ubiquinone as an electron acceptor. Essential for the catalytic activity and assembly of complex I. This is NADH-ubiquinone oxidoreductase chain 5 from Rattus norvegicus (Rat).